A 946-amino-acid polypeptide reads, in one-letter code: Bifunctional glutamine synthetase adenylyltransferase/adenylyl-removing enzyme (946 aa).

Residues 1–440 (MKPLSSPLQQ…VFNELIGDDE (440 aa)) form an adenylyl removase region. The tract at residues 449-946 (SEQWRELWQD…ASWQKWLVEE (498 aa)) is adenylyl transferase.

Belongs to the GlnE family. Mg(2+) is required as a cofactor.

The enzyme catalyses [glutamine synthetase]-O(4)-(5'-adenylyl)-L-tyrosine + phosphate = [glutamine synthetase]-L-tyrosine + ADP. It carries out the reaction [glutamine synthetase]-L-tyrosine + ATP = [glutamine synthetase]-O(4)-(5'-adenylyl)-L-tyrosine + diphosphate. Involved in the regulation of glutamine synthetase GlnA, a key enzyme in the process to assimilate ammonia. When cellular nitrogen levels are high, the C-terminal adenylyl transferase (AT) inactivates GlnA by covalent transfer of an adenylyl group from ATP to specific tyrosine residue of GlnA, thus reducing its activity. Conversely, when nitrogen levels are low, the N-terminal adenylyl removase (AR) activates GlnA by removing the adenylyl group by phosphorolysis, increasing its activity. The regulatory region of GlnE binds the signal transduction protein PII (GlnB) which indicates the nitrogen status of the cell. In Escherichia coli O8 (strain IAI1), this protein is Bifunctional glutamine synthetase adenylyltransferase/adenylyl-removing enzyme.